Consider the following 188-residue polypeptide: Photosystem I assembly protein Ycf4 (188 aa).

The next 2 membrane-spanning stretches (helical) occupy residues 26 to 46 and 70 to 90; these read YFWA…GLSS and LLFY…SLLW.

Belongs to the Ycf4 family.

It localises to the cellular thylakoid membrane. In terms of biological role, seems to be required for the assembly of the photosystem I complex. The protein is Photosystem I assembly protein Ycf4 of Microcystis aeruginosa (strain NIES-843 / IAM M-2473).